The sequence spans 1430 residues: Caskin-1 (1430 aa).

ANK repeat units lie at residues 48-77, 81-110, 114-143, 147-176, 188-217, and 220-249; these read DGFS…AVDI, KGMR…AVNV, EGHI…NPCI, SGKT…CAAL, NGTS…DINR, and KSGT…NAQV. Position 253 is a phosphotyrosine (Tyr253). The SH3 domain maps to 281 to 347; sequence SAALQVRATK…PSSLGEAIVK (67 aa). Residues 348–372 form a disordered region; that stretch reads RAGSRTGSEPSPPQGGGSLGPSAPP. A Phosphoserine modification is found at Ser358. Residues 375–471 are CASK-binding; the sequence is IWVLRKPFAG…PKKLESSSAS (97 aa). Arg398 carries the omega-N-methylarginine modification. Over residues 421–430 the composition is skewed to polar residues; the sequence is QKSVSESSPG. Residues 421 to 472 form a disordered region; that stretch reads QKSVSESSPGDSPVKPPEGSSGAARSQPPAAHAGQVYGEQPPKKLESSSASE. Phosphoserine occurs at positions 423 and 432. SAM domains are found at residues 474 to 537 and 543 to 607; these read KSAE…LNIP and HKPA…LAEL. Residues Ser635 and Ser648 each carry the phosphoserine modification. Residues 667–679 show a composition bias toward low complexity; sequence LSGPAEAGAAAAE. Disordered regions lie at residues 667 to 1001, 1015 to 1040, 1055 to 1371, and 1388 to 1407; these read LSGP…SAGS, GGGG…DPGR, GPDG…RQKL, and KIRQ…EKST. A compositionally biased stretch (polar residues) spans 683–711; the sequence is NHLPATPRTTSRQESSLSGRARHMSSSQE. 2 positions are modified to phosphoserine: Ser722 and Ser727. Residue Thr740 is modified to Phosphothreonine. Ser790 is subject to Phosphoserine. Residues 847–859 are compositionally biased toward pro residues; that stretch reads PPAPGPVPPPVPA. Residues Ser890, Ser892, and Ser988 each carry the phosphoserine modification. Over residues 1027–1036 the composition is skewed to pro residues; sequence GHPTPRPASP. Residue Thr1066 is modified to Phosphothreonine. At Ser1068 the chain carries Phosphoserine. Over residues 1147-1159 the composition is skewed to basic and acidic residues; sequence DTVKRRPKAKEPD. Pro residues predominate over residues 1190 to 1214; it reads PELPPPPPPAEPPPTDLMPLPPLPL. Ser1258 carries the post-translational modification Phosphoserine. Thr1267 carries the post-translational modification Phosphothreonine. Over residues 1267-1282 the composition is skewed to pro residues; the sequence is TPPPVSPKPPPPPTAP. 3 stretches are compositionally biased toward low complexity: residues 1283-1298, 1308-1326, and 1344-1358; these read KPAK…SATP, PPAA…SASP, and PRAA…PVAS. A Phosphoserine modification is found at Ser1362. Residues 1388–1406 show a composition bias toward basic and acidic residues; it reads KIRQEDGQGPRPSSIEEKS.

In terms of assembly, polymerizes, via the tandem SAM domains, to form long, 8 nM wide fibers, upon which other proteins can assemble. Binds the CaM kinase domain of CASK. Forms a ternary complex with CASK and LIN7A, LIN7B or LIN7C. Competes with APBA1 that forms a similar complex with CASK and LIN7 proteins. The tripartite complex CASKIN1/CASK/LIN7(A/B/C) binds the cytoplasmic tail of NRXN1. As to expression, expressed in brain. Localized primarily to the neuropil and enriched in synaptic areas (at protein level).

It localises to the cytoplasm. In terms of biological role, may link the scaffolding protein CASK to downstream intracellular effectors. The sequence is that of Caskin-1 (Caskin1) from Rattus norvegicus (Rat).